A 307-amino-acid polypeptide reads, in one-letter code: Taste receptor type 2 member 41 (307 aa).

Topologically, residues 1-7 (MQAALTA) are extracellular. The chain crosses the membrane as a helical span at residues 8–28 (FFMLLFSLLSLLGIAANGFIV). The Cytoplasmic segment spans residues 29-40 (LVLGREWLRYGR). A helical transmembrane segment spans residues 41–61 (LLPLDMILISLGASRFCLQLV). The Extracellular segment spans residues 62–88 (GTVHNFYYSAQKVEYSGGLGRQFFHLH). Residues 89–109 (WHFLNSATFWFCSWLSVLFCV) traverse the membrane as a helical segment. Topologically, residues 110–129 (KIANITHPTFLWLKWRFPAW) are cytoplasmic. Residues 130–150 (VPWLLLGSVLISFIITLLFFW) form a helical membrane-spanning segment. Over 151-183 (VNYPAYQEFLIRKFSVNMTYKWNTRIETYYFPS) the chain is Extracellular. The N-linked (GlcNAc...) asparagine glycan is linked to Asn-167. The helical transmembrane segment at 184–204 (LKLVIWSIPFSVFLVSIMLLI) threads the bilayer. At 205 to 234 (NSLRRHTQRMQHNGHSLQDPSTQAHTRALK) the chain is on the cytoplasmic side. Residues 235–255 (SLISFLILYALSFLSLIIDAT) traverse the membrane as a helical segment. The Extracellular portion of the chain corresponds to 256-264 (KFISMQNDF). The helical transmembrane segment at 265-285 (YWPWQIAVYLCISIHPFILIF) threads the bilayer. At 286–307 (SNLKLRSVFSQLLLLARGFWVA) the chain is on the cytoplasmic side.

The protein belongs to the G-protein coupled receptor T2R family.

The protein localises to the membrane. Its function is as follows. Receptor that may play a role in the perception of bitterness and is gustducin-linked. May play a role in sensing the chemical composition of the gastrointestinal content. The activity of this receptor may stimulate alpha gustducin, mediate PLC-beta-2 activation and lead to the gating of TRPM5. This is Taste receptor type 2 member 41 (TAS2R41) from Pan paniscus (Pygmy chimpanzee).